Consider the following 881-residue polypeptide: Leucine--tRNA ligase (881 aa).

The 'HIGH' region motif lies at P48–H58. A 'KMSKS' region motif is present at residues K638–S642. K641 is a binding site for ATP.

The protein belongs to the class-I aminoacyl-tRNA synthetase family.

The protein resides in the cytoplasm. It carries out the reaction tRNA(Leu) + L-leucine + ATP = L-leucyl-tRNA(Leu) + AMP + diphosphate. The sequence is that of Leucine--tRNA ligase from Janthinobacterium sp. (strain Marseille) (Minibacterium massiliensis).